The primary structure comprises 663 residues: Sodium/potassium/calcium exchanger 1 (663 aa).

Residues 32–128 (SPSAIPALLT…DLFSVEERRQ (97 aa)) lie on the Extracellular side of the membrane. N-linked (GlcNAc...) asparagine glycans are attached at residues Asn59, Asn66, and Asn100. Residues 129 to 149 (GWVVLHIFGMMYVFVALAIVC) traverse the membrane as a helical segment. Topologically, residues 150–173 (DEYFVPALGVITEKLQISEDVAGA) are cytoplasmic. An Alpha-1 repeat occupies 170–210 (VAGATFMAAGGSAPELFTSLIGVFISHSNVGIGTIVGSAVF). Residues 174–194 (TFMAAGGSAPELFTSLIGVFI) traverse the membrane as a helical segment. The Extracellular portion of the chain corresponds to 195–200 (SHSNVG). The chain crosses the membrane as a helical span at residues 201–221 (IGTIVGSAVFNILFVIGTCAL). The Cytoplasmic segment spans residues 222 to 228 (FSREILH). The chain crosses the membrane as a helical span at residues 229–253 (LTWWPLFRDISFYIVDLLMLILFFL). At 254–259 (DSVIDW) the chain is on the extracellular side. Residues 260–276 (WESLLLLTAYATYVFTM) traverse the membrane as a helical segment. At 277–471 (KHNVSLEQWV…SLEWPETRKK (195 aa)) the chain is on the cytoplasmic side. Disordered stretches follow at residues 308 to 343 (KSSV…SLHN) and 384 to 465 (LTGQ…SLEW). The span at 316–325 (DGTKPADGKK) shows a compositional bias: basic and acidic residues. Composition is skewed to polar residues over residues 327–343 (QPTT…SLHN) and 399–412 (ASQN…ASDS). Ser337 bears the Phosphoserine mark. Positions 413–423 (EPSKDKQKEDT) are enriched in basic and acidic residues. The segment covering 434–461 (DNSEDSSSDSEDDSDDDSTDDEENDEPL) has biased composition (acidic residues). The helical transmembrane segment at 472-492 (QAIYLFLFPIVFPLWSTIPDV) threads the bilayer. Topologically, residues 493 to 499 (RNPDSKK) are extracellular. Residues 500-520 (FFVITFFGSIIWIAAFSYLMV) form a helical membrane-spanning segment. At 521–535 (WWAHQVGETIGISEE) the chain is on the cytoplasmic side. A helical membrane pass occupies residues 536–556 (IMGLTILAAGTSIPDLITSVI). The Alpha-2 repeat unit spans residues 543 to 574 (AAGTSIPDLITSVIVARKGLGDMAVSSSVGSN). The Extracellular portion of the chain corresponds to 557 to 574 (VARKGLGDMAVSSSVGSN). A helical transmembrane segment spans residues 575–595 (IFDITVGLPVPWFLYSVFNGF). The Cytoplasmic segment spans residues 596–604 (SPVAVSSNG). The chain crosses the membrane as a helical span at residues 605–625 (LFCAIVLLFLMLLFVIISIAL). Residues 626-632 (CKWKMNK) are Extracellular-facing. A helical transmembrane segment spans residues 633–653 (ILGVTMFALYFVFLIISVMLE). Residues 654 to 663 (DRIISCPVSV) lie on the Cytoplasmic side of the membrane.

It belongs to the Ca(2+):cation antiporter (CaCA) (TC 2.A.19) family. SLC24A subfamily. In terms of processing, the uncleaved signal sequence is required for efficient membrane targeting and proper membrane integration and topology. Retinal rods. Localizes to the inner segment of rod photoreceptors.

The protein resides in the cell membrane. It carries out the reaction Ca(2+)(out) + K(+)(out) + 4 Na(+)(in) = Ca(2+)(in) + K(+)(in) + 4 Na(+)(out). Calcium, potassium:sodium antiporter that transports 1 Ca(2+) and 1 K(+) in exchange for 4 Na(+). Critical component of the visual transduction cascade, controlling the calcium concentration of outer segments during light and darkness. Light causes a rapid lowering of cytosolic free calcium in the outer segment of both retinal rod and cone photoreceptors and the light-induced lowering of calcium is caused by extrusion via this protein which plays a key role in the process of light adaptation. The polypeptide is Sodium/potassium/calcium exchanger 1 (SLC24A1) (Gallus gallus (Chicken)).